Consider the following 699-residue polypeptide: Ribosomal RNA large subunit methyltransferase K/L (699 aa).

One can recognise a THUMP domain in the interval 44-155; the sequence is DAYKLCLWSR…RDNVILGIDL (112 aa).

This sequence belongs to the methyltransferase superfamily. RlmKL family.

The protein localises to the cytoplasm. It catalyses the reaction guanosine(2445) in 23S rRNA + S-adenosyl-L-methionine = N(2)-methylguanosine(2445) in 23S rRNA + S-adenosyl-L-homocysteine + H(+). The catalysed reaction is guanosine(2069) in 23S rRNA + S-adenosyl-L-methionine = N(2)-methylguanosine(2069) in 23S rRNA + S-adenosyl-L-homocysteine + H(+). Functionally, specifically methylates the guanine in position 2445 (m2G2445) and the guanine in position 2069 (m7G2069) of 23S rRNA. The protein is Ribosomal RNA large subunit methyltransferase K/L of Alteromonas mediterranea (strain DSM 17117 / CIP 110805 / LMG 28347 / Deep ecotype).